The chain runs to 309 residues: Ribosomal RNA small subunit methyltransferase H (309 aa).

S-adenosyl-L-methionine is bound by residues Gly-44–His-46, Asp-62, Phe-102, Asp-118, and Gln-125. The tract at residues Leu-289–Ser-309 is disordered.

Belongs to the methyltransferase superfamily. RsmH family.

The protein resides in the cytoplasm. It catalyses the reaction cytidine(1402) in 16S rRNA + S-adenosyl-L-methionine = N(4)-methylcytidine(1402) in 16S rRNA + S-adenosyl-L-homocysteine + H(+). Specifically methylates the N4 position of cytidine in position 1402 (C1402) of 16S rRNA. This chain is Ribosomal RNA small subunit methyltransferase H, found in Synechococcus sp. (strain JA-3-3Ab) (Cyanobacteria bacterium Yellowstone A-Prime).